A 158-amino-acid polypeptide reads, in one-letter code: uncharacterized protein (158 aa).

2 helical membrane passes run Leu-10–Val-30 and Ile-137–Phe-157.

It is found in the cell membrane. This is an uncharacterized protein from Bacillus subtilis (strain 168).